Consider the following 274-residue polypeptide: Dermonecrotic toxin LarSicTox-alphaIB2bii (274 aa).

His3 is a catalytic residue. The Mg(2+) site is built by Glu23 and Asp25. The active-site Nucleophile is the His39. Disulfide bonds link Cys43–Cys49 and Cys45–Cys188. Mg(2+) is bound at residue Asp83. Residue Asn251 is glycosylated (N-linked (GlcNAc...) asparagine).

The protein belongs to the arthropod phospholipase D family. Class II subfamily. Mg(2+) serves as cofactor. Expressed by the venom gland.

It localises to the secreted. It catalyses the reaction an N-(acyl)-sphingosylphosphocholine = an N-(acyl)-sphingosyl-1,3-cyclic phosphate + choline. The enzyme catalyses an N-(acyl)-sphingosylphosphoethanolamine = an N-(acyl)-sphingosyl-1,3-cyclic phosphate + ethanolamine. The catalysed reaction is a 1-acyl-sn-glycero-3-phosphocholine = a 1-acyl-sn-glycero-2,3-cyclic phosphate + choline. It carries out the reaction a 1-acyl-sn-glycero-3-phosphoethanolamine = a 1-acyl-sn-glycero-2,3-cyclic phosphate + ethanolamine. Dermonecrotic toxins cleave the phosphodiester linkage between the phosphate and headgroup of certain phospholipids (sphingolipid and lysolipid substrates), forming an alcohol (often choline) and a cyclic phosphate. This toxin acts on sphingomyelin (SM). It may also act on ceramide phosphoethanolamine (CPE), lysophosphatidylcholine (LPC) and lysophosphatidylethanolamine (LPE), but not on lysophosphatidylserine (LPS), and lysophosphatidylglycerol (LPG). It acts by transphosphatidylation, releasing exclusively cyclic phosphate products as second products. Induces dermonecrosis, hemolysis, increased vascular permeability, edema, inflammatory response, and platelet aggregation. This chain is Dermonecrotic toxin LarSicTox-alphaIB2bii, found in Loxosceles arizonica (Arizona brown spider).